The primary structure comprises 160 residues: Large ribosomal subunit protein eL29 (160 aa).

A compositionally biased stretch (basic residues) spans 1–26; it reads MAKSKNHTTHNQSRKWHRNGIKKPRS. Positions 1–32 are disordered; that stretch reads MAKSKNHTTHNQSRKWHRNGIKKPRSQRYESL. Position 5 is an N6-methyllysine (K5). Residue S31 is modified to Phosphoserine. K33 is modified (N6-acetyllysine). The interval 119-160 is disordered; the sequence is CRPKSQAKAQSKAKATAGGTAAAPVPPASAPKGAQAPTKAPQ. The segment covering 121 to 141 has biased composition (low complexity); the sequence is PKSQAKAQSKAKATAGGTAAA.

Belongs to the eukaryotic ribosomal protein eL29 family. As to quaternary structure, component of the large ribosomal subunit.

It localises to the cytoplasm. In terms of biological role, component of the large ribosomal subunit. The ribosome is a large ribonucleoprotein complex responsible for the synthesis of proteins in the cell. The sequence is that of Large ribosomal subunit protein eL29 (RPL29) from Sus scrofa (Pig).